We begin with the raw amino-acid sequence, 748 residues long: Ribonucleoprotein PTB-binding 1 (748 aa).

The segment at 1-42 (MAADVSVTHRPPLSPEAEAEAETPETVDRRTPEQELPPLDPE) is disordered. Ala2 carries the N-acetylalanine modification. A phosphoserine mark is found at Ser6 and Ser14. Thr31 is modified (phosphothreonine). The Nuclear localization signal signature appears at 45–60 (RKRLEHTERQFRNRRK). RRM domains lie at 59–130 (RKIL…LQPT), 132–210 (ALLC…WTDA), and 221–299 (RCLC…FCAP). Positions 307 to 401 (LAALIAAQAT…QSQSQKKPGI (95 aa)) are interaction with PTBP1. 3 disordered regions span residues 390–505 (QSQS…GEPP), 525–647 (SNLA…PLSH), and 672–731 (KAVG…QHSQ). Thr469 carries the post-translational modification Phosphothreonine. Residues Ser480, Ser576, Ser626, and Ser630 each carry the phosphoserine modification. Over residues 675–685 (GSSPMGSSEGL) the composition is skewed to low complexity. Phosphoserine occurs at positions 716 and 720. The short motif at 743-746 (KRKR) is the Nuclear localization signal element.

Interacts with PTBP1, RAVER2, VCL and ACTN1. Part of a complex containing RAVER1, VCL and ACTN1. Ubiquitous. Detected in aorta, brain, gut, heart, kidney, liver, spleen, uterus and skeletal muscle.

It localises to the nucleus. The protein localises to the cytoplasm. Cooperates with PTBP1 to modulate regulated alternative splicing events. Promotes exon skipping. Cooperates with PTBP1 to modulate switching between mutually exclusive exons during maturation of the TPM1 pre-mRNA. This chain is Ribonucleoprotein PTB-binding 1 (Raver1), found in Rattus norvegicus (Rat).